The chain runs to 255 residues: Type III pantothenate kinase (255 aa).

7–14 (DVGNTRLK) serves as a coordination point for ATP. Substrate contacts are provided by residues Y96 and 103-106 (GADR). D105 serves as the catalytic Proton acceptor. An ATP-binding site is contributed by T133. T183 contributes to the substrate binding site.

It belongs to the type III pantothenate kinase family. As to quaternary structure, homodimer. NH4(+) serves as cofactor. K(+) is required as a cofactor.

The protein localises to the cytoplasm. The catalysed reaction is (R)-pantothenate + ATP = (R)-4'-phosphopantothenate + ADP + H(+). The protein operates within cofactor biosynthesis; coenzyme A biosynthesis; CoA from (R)-pantothenate: step 1/5. Catalyzes the phosphorylation of pantothenate (Pan), the first step in CoA biosynthesis. This is Type III pantothenate kinase from Polaromonas sp. (strain JS666 / ATCC BAA-500).